An 85-amino-acid chain; its full sequence is Small ribosomal subunit protein uS17 (85 aa).

It belongs to the universal ribosomal protein uS17 family. As to quaternary structure, part of the 30S ribosomal subunit.

One of the primary rRNA binding proteins, it binds specifically to the 5'-end of 16S ribosomal RNA. The chain is Small ribosomal subunit protein uS17 from Geobacter sp. (strain M21).